A 526-amino-acid polypeptide reads, in one-letter code: Alpha-N-acetylgalactosaminide alpha-2,6-sialyltransferase 1 (526 aa).

Residues 1–12 are Cytoplasmic-facing; it reads MTRYCRGLSQRQ. Residues 13–33 form a helical; Signal-anchor for type II membrane protein membrane-spanning segment; sequence AFLLLTVLALLFILLFVVKDP. Over 34-526 the chain is Lumenal; the sequence is RAKDSRCQFI…QRPQSDKAKN (493 aa). The tract at residues 49 to 182 is disordered; sequence SAQENQQKAE…TRRRQRLKAS (134 aa). Positions 81-106 are enriched in basic and acidic residues; the sequence is KDLKKQEREAVQGEQAEGKEKRKLET. A compositionally biased stretch (polar residues) spans 161–171; sequence ATKSPASSPHP. N-linked (GlcNAc...) asparagine glycosylation is found at asparagine 206, asparagine 228, asparagine 259, asparagine 303, and asparagine 388. 2 cysteine pairs are disulfide-bonded: cysteine 207–cysteine 290 and cysteine 293–cysteine 461.

This sequence belongs to the glycosyltransferase 29 family. In terms of processing, glycosylated; autosialylated. As to expression, submaxillary gland, mammary gland, spleen and colon.

The protein localises to the golgi apparatus membrane. It catalyses the reaction a beta-D-galactosyl-(1-&gt;3)-N-acetyl-alpha-D-galactosaminyl derivative + CMP-N-acetyl-beta-neuraminate = a beta-D-galactosyl-(1-&gt;3)-[N-acetyl-alpha-neuraminyl-(2-&gt;6)]-N-acetyl-alpha-D-galactosaminyl derivative + CMP + H(+). The enzyme catalyses a 3-O-[N-acetyl-alpha-D-galactosaminyl]-L-seryl-[protein] + CMP-N-acetyl-beta-neuraminate = a 3-O-[N-acetyl-alpha-neuraminosyl-(2-&gt;6)-N-acetyl-alpha-D-galactosaminyl]-L-seryl-[protein] + CMP + H(+). It carries out the reaction a 3-O-[N-acetyl-alpha-D-galactosaminyl]-L-threonyl-[protein] + CMP-N-acetyl-beta-neuraminate = a 3-O-[N-acetyl-alpha-neuraminosyl-(2-&gt;6)-N-acetyl-alpha-D-galactosaminyl]-L-threonyl-[protein] + CMP + H(+). The catalysed reaction is a 3-O-[beta-D-galactosyl-(1-&gt;3)-N-acetyl-alpha-D-galactosaminyl]-L-seryl-[protein] + CMP-N-acetyl-beta-neuraminate = a 3-O-{beta-D-galactosyl-(1-&gt;3)-[N-acetyl-alpha-neuraminosyl-(2-&gt;6)]-N-acetyl-alpha-D-galactosaminyl}-L-seryl-[protein] + CMP + H(+). It catalyses the reaction a 3-O-[beta-D-galactosyl-(1-&gt;3)-N-acetyl-alpha-D-galactosaminyl]-L-threonyl-[protein] + CMP-N-acetyl-beta-neuraminate = a 3-O-{beta-D-galactosyl-(1-&gt;3)-[N-acetyl-alpha-neuraminosyl-(2-&gt;6)]-N-acetyl-alpha-D-galactosaminyl}-L-threonyl-[protein] + CMP + H(+). The enzyme catalyses a 3-O-[N-acetyl-alpha-neuraminyl-(2-&gt;3)-beta-D-galactosyl-(1-&gt;3)-N-acetyl-alpha-D-galactosaminyl]-L-threonyl-[protein] + CMP-N-acetyl-beta-neuraminate = a 3-O-{alpha-Neu5Ac-(2-&gt;3)-beta-D-Gal-(1-&gt;3)-[alpha-Neu5Ac-(2-&gt;6)]-alpha-D-GalNAc}-L-threonyl-[protein] + CMP + H(+). It participates in protein modification; protein glycosylation. Functionally, protein sialyltransferase specifically expressed in goblet cells that plays a key role in intestinal host-commensal homeostasis. Conjugates sialic acid with an alpha-2-6 linkage to N-acetylgalactosamine (GalNAc) glycan chains linked to serine or threonine in glycoproteins. Catalyzes the formation of the sialyl-Tn (S-Tn) antigen, an antigen found in intestinal goblet cells. Protein sialylation in globlet cells is essential for mucus integrity and is required to protect the intestinal mucus against excessive bacterial proteolytic degradation. The polypeptide is Alpha-N-acetylgalactosaminide alpha-2,6-sialyltransferase 1 (Mus musculus (Mouse)).